The primary structure comprises 122 residues: Large ribosomal subunit protein uL14c (122 aa).

This sequence belongs to the universal ribosomal protein uL14 family. Part of the 50S ribosomal subunit.

The protein localises to the plastid. The protein resides in the chloroplast. Functionally, binds to 23S rRNA. The protein is Large ribosomal subunit protein uL14c of Panax ginseng (Korean ginseng).